An 89-amino-acid polypeptide reads, in one-letter code: Large ribosomal subunit protein eL34 (89 aa).

The protein belongs to the eukaryotic ribosomal protein eL34 family.

The sequence is that of Large ribosomal subunit protein eL34 from Methanococcus vannielii (strain ATCC 35089 / DSM 1224 / JCM 13029 / OCM 148 / SB).